Reading from the N-terminus, the 255-residue chain is AA9 family lytic polysaccharide monooxygenase D (255 aa).

An N-terminal signal peptide occupies residues 1 to 19 (MYRTLGSIALLAGGAAAHG). Residues His-18 and His-92 each contribute to the Cu(2+) site. Disulfide bonds link Cys-65–Cys-189 and Cys-104–Cys-111. Asn-152 carries an N-linked (GlcNAc...) asparagine glycan. O2-binding residues include His-178 and Gln-184. Tyr-186 contacts Cu(2+). Asn-220 carries N-linked (GlcNAc...) asparagine glycosylation.

Belongs to the polysaccharide monooxygenase AA9 family. It depends on Cu(2+) as a cofactor.

The protein resides in the secreted. The enzyme catalyses [(1-&gt;4)-beta-D-glucosyl]n+m + reduced acceptor + O2 = 4-dehydro-beta-D-glucosyl-[(1-&gt;4)-beta-D-glucosyl]n-1 + [(1-&gt;4)-beta-D-glucosyl]m + acceptor + H2O.. Lytic polysaccharide monooxygenase (LPMO) that depolymerizes crystalline and amorphous polysaccharides via the oxidation of scissile alpha- or beta-(1-4)-glycosidic bonds, yielding specifically C1 oxidation product. Catalysis by LPMOs requires the reduction of the active-site copper from Cu(II) to Cu(I) by a reducing agent and H(2)O(2) or O(2) as a cosubstrate. Is active on regenerated amorphous cellulose (RAC) in the presence of ascorbic acid or 3-methylcatechol. Also acts on phosphoric acid swollen cellulose (PASC) as a substrate. The polypeptide is AA9 family lytic polysaccharide monooxygenase D (Thermothelomyces thermophilus (strain ATCC 42464 / BCRC 31852 / DSM 1799) (Sporotrichum thermophile)).